We begin with the raw amino-acid sequence, 560 residues long: DNA ligase B (560 aa).

The active-site N6-AMP-lysine intermediate is the Lys-124.

Belongs to the NAD-dependent DNA ligase family. LigB subfamily.

It carries out the reaction NAD(+) + (deoxyribonucleotide)n-3'-hydroxyl + 5'-phospho-(deoxyribonucleotide)m = (deoxyribonucleotide)n+m + AMP + beta-nicotinamide D-nucleotide.. Catalyzes the formation of phosphodiester linkages between 5'-phosphoryl and 3'-hydroxyl groups in double-stranded DNA using NAD as a coenzyme and as the energy source for the reaction. The sequence is that of DNA ligase B from Escherichia coli O6:H1 (strain CFT073 / ATCC 700928 / UPEC).